A 377-amino-acid polypeptide reads, in one-letter code: Acetyltransferase ple2 (377 aa).

The signal sequence occupies residues 1–27 (MKPFSPELLVLSFILLVLSCAIRPAKG). The next 4 membrane-spanning stretches (helical) occupy residues 29–49 (WILW…TTGD), 56–76 (IANN…LTDV), 176–196 (IAAW…ALSL), and 258–278 (PALY…HAIG).

Belongs to the wax synthase family.

The protein resides in the membrane. It functions in the pathway secondary metabolite biosynthesis; terpenoid biosynthesis. Functionally, acetyltransferase; part of the gene cluster that mediates the biosynthesis of pleuromutilin, a tricyclic diterpene showing antibacterial properties. The geranylgeranyl diphosphate (GGPP) synthase ple4 catalyzes the first step in pleuromutilin biosynthesis. GGPP is then substrate of the premutilin synthase (PS) ple3 to yield premutilin. Premutilin synthase is a bifunctional enzyme composed of the fusion of a class II diterpene cyclase (DTC) and a class I diterpene synthase (DTS), with the corresponding domains and active sites containing characteristic aspartate-rich motifs. GGPP is first converted to mutildienyl-diphosphate (MPP) at the class II DTC site. MPP is subsequently further cyclized at the class I DTS site, followed by a 1,5-hydride shift and addition of water prior to terminating deprotonation, to yield premutilin. The cytochrome P450 monooxygenases ple5 and ple6 hydroxylate premutilin at C-11 and C-3, respectively, producing 11-hydroxypremutilin and 3-hydroxypremutilin. The combination of the actions of both ple5 and ple6 leads to the production of 3,11-dihydroxypremutilin. The short chain dehydrogenase ple7 further converts 3,11-dihydroxypremutilin into mutilin. The acetyltransferase ple2 then acetylates mutilin to produce 14-O-acetylmutilin. Finally, the cytochrome P450 monooxygenase ple1 catalyzes hydroxylation on the alpha position of the acetyl side chain of 14-O-acetylmutilin to yield pleuromutilin. The protein is Acetyltransferase ple2 of Rhodocybe pseudopiperita (Clitopilus pseudopiperitus).